Here is a 549-residue protein sequence, read N- to C-terminus: MAAKDVKFGNDARVKMLRGVNVLADAVKVTLGPKGRNVVLDKSFGAPTITKDGVSVAREIELEDKFENMGAQMVKEVASKANDAAGDGTTTATVLAQSIITEGLKAVAAGMNPMDLKRGIDKAVIAAVEELKKQSVPCSDFKAIAQVGTISANSDETVGKLIAEAMEKVGKEGVITVEEGTGLQDELDVVEGMQFDRGYLSPYFINKPETGSIELESPFILLADKKISNIREMLPVLEAVAKAGKPLLIIAEDVEGEALATLVVNTMRGIVKVAAVKAPGFGDRRKAMLQDIATLTAGTVISEEIGLELEKATLEDLGQAKRVVINKDTTIIIDGVGDEVAIQGRVTQIRQQIEDATSDYDKEKLQERVAKLAGGVAVIKVGAATEVEMKEKKARVEDALHATRAAVEEGVVAGGGVALIRAAASISVSGLKGDNEDQNVGIKVALRAMESPLRQIVINAGEEASVIANTVKAGEGSYGYNAYTEEYGDMIAMGILDPTKVTRSALQYAASIAGLMITTECMVTDLPKGDAPDLGAGGMGGMGGMGGMM.

Residues 30–33 (TLGP), Lys-51, 87–91 (DGTTT), Gly-415, and Asp-497 contribute to the ATP site.

It belongs to the chaperonin (HSP60) family. Forms a cylinder of 14 subunits composed of two heptameric rings stacked back-to-back. Interacts with the co-chaperonin GroES.

Its subcellular location is the cytoplasm. The enzyme catalyses ATP + H2O + a folded polypeptide = ADP + phosphate + an unfolded polypeptide.. In terms of biological role, together with its co-chaperonin GroES, plays an essential role in assisting protein folding. The GroEL-GroES system forms a nano-cage that allows encapsulation of the non-native substrate proteins and provides a physical environment optimized to promote and accelerate protein folding. This is Chaperonin GroEL from Pectobacterium atrosepticum (strain SCRI 1043 / ATCC BAA-672) (Erwinia carotovora subsp. atroseptica).